The sequence spans 459 residues: NADH oxidase (459 aa).

Residue asparagine 10 participates in FAD binding. The Proton acceptor role is filled by histidine 11. Residues alanine 12, aspartate 34, glutamine 35, cysteine 44, valine 81, alanine 110, serine 113, lysine 143, and tyrosine 172 each coordinate FAD. Catalysis depends on cysteine 44, which acts as the Redox-active. Cysteine sulfinic acid (-SO2H) is present on cysteine 44. Isoleucine 173, aspartate 192, tyrosine 201, and glycine 256 together coordinate NAD(+). Position 294 (aspartate 294) interacts with FAD. NAD(+) is bound at residue alanine 310. Residues leucine 311, alanine 312, and serine 313 each coordinate FAD. Glycine 341 provides a ligand contact to NAD(+). Position 439 (phenylalanine 439) interacts with FAD.

The protein belongs to the class-III pyridine nucleotide-disulfide oxidoreductase family. FAD serves as cofactor.

Its subcellular location is the secreted. It is found in the cell wall. It catalyses the reaction 2 NADH + O2 + 2 H(+) = 2 NAD(+) + 2 H2O. Functionally, catalyzes the four-electron reduction of molecular oxygen to water. Plays a role in redox balance maintenance. May be involved in mediating bacterial adhesion to host cells. May be considered a potential virulence factor. The polypeptide is NADH oxidase (Streptococcus pneumoniae serotype 4 (strain ATCC BAA-334 / TIGR4)).